A 190-amino-acid polypeptide reads, in one-letter code: GTP cyclohydrolase 1 (190 aa).

Zn(2+) is bound by residues Cys-75, His-78, and Cys-146.

This sequence belongs to the GTP cyclohydrolase I family. Homomer.

It catalyses the reaction GTP + H2O = 7,8-dihydroneopterin 3'-triphosphate + formate + H(+). It participates in cofactor biosynthesis; 7,8-dihydroneopterin triphosphate biosynthesis; 7,8-dihydroneopterin triphosphate from GTP: step 1/1. The protein is GTP cyclohydrolase 1 of Campylobacter lari (strain RM2100 / D67 / ATCC BAA-1060).